The sequence spans 351 residues: Holliday junction branch migration complex subunit RuvB (351 aa).

A large ATPase domain (RuvB-L) region spans residues 1–182 (MNDRLITPDA…FGIVQRLEYY (182 aa)). Residues I21, R22, G63, K66, T67, T68, 129–131 (EDF), R172, Y182, and R219 contribute to the ATP site. T67 is a binding site for Mg(2+). The tract at residues 183–253 (NVADLSGIVK…VAHAAMELLN (71 aa)) is small ATPAse domain (RuvB-S). Residues 256–351 (RNGFDEQDRR…QDAPPVGRER (96 aa)) form a head domain (RuvB-H) region. Positions 292, 311, and 316 each coordinate DNA. Positions 328–351 (LNPPRQPDTSPDLFQDAPPVGRER) are disordered.

Belongs to the RuvB family. As to quaternary structure, homohexamer. Forms an RuvA(8)-RuvB(12)-Holliday junction (HJ) complex. HJ DNA is sandwiched between 2 RuvA tetramers; dsDNA enters through RuvA and exits via RuvB. An RuvB hexamer assembles on each DNA strand where it exits the tetramer. Each RuvB hexamer is contacted by two RuvA subunits (via domain III) on 2 adjacent RuvB subunits; this complex drives branch migration. In the full resolvosome a probable DNA-RuvA(4)-RuvB(12)-RuvC(2) complex forms which resolves the HJ.

It is found in the cytoplasm. It catalyses the reaction ATP + H2O = ADP + phosphate + H(+). Functionally, the RuvA-RuvB-RuvC complex processes Holliday junction (HJ) DNA during genetic recombination and DNA repair, while the RuvA-RuvB complex plays an important role in the rescue of blocked DNA replication forks via replication fork reversal (RFR). RuvA specifically binds to HJ cruciform DNA, conferring on it an open structure. The RuvB hexamer acts as an ATP-dependent pump, pulling dsDNA into and through the RuvAB complex. RuvB forms 2 homohexamers on either side of HJ DNA bound by 1 or 2 RuvA tetramers; 4 subunits per hexamer contact DNA at a time. Coordinated motions by a converter formed by DNA-disengaged RuvB subunits stimulates ATP hydrolysis and nucleotide exchange. Immobilization of the converter enables RuvB to convert the ATP-contained energy into a lever motion, pulling 2 nucleotides of DNA out of the RuvA tetramer per ATP hydrolyzed, thus driving DNA branch migration. The RuvB motors rotate together with the DNA substrate, which together with the progressing nucleotide cycle form the mechanistic basis for DNA recombination by continuous HJ branch migration. Branch migration allows RuvC to scan DNA until it finds its consensus sequence, where it cleaves and resolves cruciform DNA. The sequence is that of Holliday junction branch migration complex subunit RuvB from Alkalilimnicola ehrlichii (strain ATCC BAA-1101 / DSM 17681 / MLHE-1).